A 133-amino-acid chain; its full sequence is NADH dehydrogenase [ubiquinone] 1 alpha subcomplex subunit 6 (133 aa).

The protein belongs to the complex I LYR family. In terms of assembly, complex I is composed of at least 49 different subunits.

The protein resides in the mitochondrion inner membrane. In terms of biological role, accessory subunit of the mitochondrial membrane respiratory chain NADH dehydrogenase (Complex I), that is believed to be not involved in catalysis. Complex I functions in the transfer of electrons from NADH to the respiratory chain. The immediate electron acceptor for the enzyme is believed to be ubiquinone. The protein is NADH dehydrogenase [ubiquinone] 1 alpha subcomplex subunit 6 of Arabidopsis thaliana (Mouse-ear cress).